A 420-amino-acid polypeptide reads, in one-letter code: Histidine--tRNA ligase (420 aa).

This sequence belongs to the class-II aminoacyl-tRNA synthetase family. In terms of assembly, homodimer.

The protein localises to the cytoplasm. The enzyme catalyses tRNA(His) + L-histidine + ATP = L-histidyl-tRNA(His) + AMP + diphosphate + H(+). This is Histidine--tRNA ligase from Saccharopolyspora erythraea (strain ATCC 11635 / DSM 40517 / JCM 4748 / NBRC 13426 / NCIMB 8594 / NRRL 2338).